The sequence spans 268 residues: Tryptophan synthase alpha chain (268 aa).

Residues Glu49 and Asp60 each act as proton acceptor in the active site.

The protein belongs to the TrpA family. As to quaternary structure, tetramer of two alpha and two beta chains.

It catalyses the reaction (1S,2R)-1-C-(indol-3-yl)glycerol 3-phosphate + L-serine = D-glyceraldehyde 3-phosphate + L-tryptophan + H2O. The protein operates within amino-acid biosynthesis; L-tryptophan biosynthesis; L-tryptophan from chorismate: step 5/5. The alpha subunit is responsible for the aldol cleavage of indoleglycerol phosphate to indole and glyceraldehyde 3-phosphate. The protein is Tryptophan synthase alpha chain of Salmonella typhimurium (strain LT2 / SGSC1412 / ATCC 700720).